We begin with the raw amino-acid sequence, 241 residues long: Adenylate kinase 3 (241 aa).

An ATP-binding site is contributed by 38 to 43 (GCGKGT). The interval 58–87 (ATGDMLRAAVAAKTPLGIKAKEAMDKGELV) is NMP. Residues T59, R64, 85 to 87 (ELV), 113 to 116 (GFPR), and Q120 each bind AMP. Positions 154 to 191 (GRWIHPSSGRSYHTKFAPPKTPGLDDVTGEPLIQRKDD) are LID. R155 lines the ATP pocket. R188 and R199 together coordinate AMP.

It belongs to the adenylate kinase family.

The protein resides in the cytoplasm. It catalyses the reaction AMP + ATP = 2 ADP. Functionally, catalyzes the reversible transfer of the terminal phosphate group between ATP and AMP. Plays an important role in cellular energy homeostasis and in adenine nucleotide metabolism. The sequence is that of Adenylate kinase 3 (ADK-A) from Oryza sativa subsp. japonica (Rice).